The sequence spans 97 residues: Mitochondrial import inner membrane translocase subunit Tim8 A (97 aa).

The Twin CX3C motif signature appears at 43–66; that stretch reads CWEKCMDKPGPKLDSRAEACFVNC. 2 cysteine pairs are disulfide-bonded: Cys43–Cys66 and Cys47–Cys62. Phosphoserine is present on residues Ser57, Ser87, Ser94, and Ser96.

This sequence belongs to the small Tim family. Heterohexamer; composed of 3 copies of TIMM8A and 3 copies of TIMM13, named soluble 70 kDa complex. Associates with the TIM22 complex, whose core is composed of TIMM22. In terms of tissue distribution, highly expressed in fetal and adult brain, followed by fetal lung, liver and kidney. Also expressed in heart, placenta, lung, liver, kidney, pancreas, skeletal muscle and heart.

Its subcellular location is the mitochondrion inner membrane. Its function is as follows. Mitochondrial intermembrane chaperone that participates in the import and insertion of some multi-pass transmembrane proteins into the mitochondrial inner membrane. Also required for the transfer of beta-barrel precursors from the TOM complex to the sorting and assembly machinery (SAM complex) of the outer membrane. Acts as a chaperone-like protein that protects the hydrophobic precursors from aggregation and guide them through the mitochondrial intermembrane space. The TIMM8-TIMM13 complex mediates the import of proteins such as TIMM23, SLC25A12/ARALAR1 and SLC25A13/ARALAR2, while the predominant TIMM9-TIMM10 70 kDa complex mediates the import of much more proteins. Probably necessary for normal neurologic development. This chain is Mitochondrial import inner membrane translocase subunit Tim8 A (TIMM8A), found in Homo sapiens (Human).